The following is a 434-amino-acid chain: Cytochrome c biogenesis protein CcsB (434 aa).

Helical transmembrane passes span 15-35 (LRVA…GTAI), 73-93 (SNWF…CSLR), and 163-183 (VGPL…VVGA).

This sequence belongs to the Ccs1/CcsB family. As to quaternary structure, may interact with CcsA.

Its subcellular location is the cellular thylakoid membrane. Its function is as follows. Required during biogenesis of c-type cytochromes (cytochrome c6 and cytochrome f) at the step of heme attachment. The polypeptide is Cytochrome c biogenesis protein CcsB (Synechococcus sp. (strain RCC307)).